A 395-amino-acid chain; its full sequence is Immediate-early protein ICP-46 (395 aa).

This sequence belongs to the IIV-6 393L family.

This chain is Immediate-early protein ICP-46 (ICR489), found in Dryophytes versicolor (chameleon treefrog).